A 432-amino-acid chain; its full sequence is 3-oxo-tetronate kinase (432 aa).

Residues histidine 155, serine 272, alanine 324, glycine 344, glutamate 348, 370 to 373 (GGET), and glycine 414 each bind ATP.

It belongs to the four-carbon acid sugar kinase family.

It catalyses the reaction 3-dehydro-L-erythronate + ATP = 3-dehydro-4-O-phospho-L-erythronate + ADP + H(+). The catalysed reaction is 3-dehydro-D-erythronate + ATP = 3-dehydro-4-O-phospho-D-erythronate + ADP + H(+). Catalyzes the ATP-dependent phosphorylation of 3-oxo-tetronate to 3-oxo-tetronate 4-phosphate. The polypeptide is 3-oxo-tetronate kinase (Cupriavidus necator (strain ATCC 17699 / DSM 428 / KCTC 22496 / NCIMB 10442 / H16 / Stanier 337) (Ralstonia eutropha)).